The primary structure comprises 29 residues: Brevinin-2Tc (29 aa).

C23 and C29 form a disulfide bridge.

The protein belongs to the frog skin active peptide (FSAP) family. Brevinin subfamily. Expressed by the skin glands.

It localises to the secreted. Functionally, antibacterial activity against representative Gram-negative and Gram-positive bacteria. This chain is Brevinin-2Tc, found in Rana temporaria (European common frog).